The chain runs to 316 residues: Ninja-family protein 2 (316 aa).

Disordered regions lie at residues 1-29 (MASR…GEPD) and 72-236 (TSDD…TSTG). Residues 99–108 (ERWRRREMQS) show a composition bias toward basic and acidic residues. Positions 156–166 (DQGNTSSSMPE) are enriched in polar residues. 2 stretches are compositionally biased toward low complexity: residues 179-199 (SSME…QNKS) and 222-235 (LRTL…TTST).

This sequence belongs to the Ninja family.

The protein localises to the nucleus. The protein is Ninja-family protein 2 (AFP-B1) of Triticum aestivum (Wheat).